The following is a 365-amino-acid chain: S-adenosylmethionine:tRNA ribosyltransferase-isomerase (365 aa).

The protein belongs to the QueA family. As to quaternary structure, monomer.

It is found in the cytoplasm. The catalysed reaction is 7-aminomethyl-7-carbaguanosine(34) in tRNA + S-adenosyl-L-methionine = epoxyqueuosine(34) in tRNA + adenine + L-methionine + 2 H(+). The protein operates within tRNA modification; tRNA-queuosine biosynthesis. Its function is as follows. Transfers and isomerizes the ribose moiety from AdoMet to the 7-aminomethyl group of 7-deazaguanine (preQ1-tRNA) to give epoxyqueuosine (oQ-tRNA). This is S-adenosylmethionine:tRNA ribosyltransferase-isomerase from Prochlorococcus marinus (strain NATL2A).